A 34-amino-acid chain; its full sequence is Photosystem II reaction center protein M (34 aa).

A helical transmembrane segment spans residues 5-25; that stretch reads ILAFIATALFILVPTAFLLII.

It belongs to the PsbM family. In terms of assembly, PSII is composed of 1 copy each of membrane proteins PsbA, PsbB, PsbC, PsbD, PsbE, PsbF, PsbH, PsbI, PsbJ, PsbK, PsbL, PsbM, PsbT, PsbX, PsbY, PsbZ, Psb30/Ycf12, at least 3 peripheral proteins of the oxygen-evolving complex and a large number of cofactors. It forms dimeric complexes.

The protein localises to the plastid. The protein resides in the chloroplast thylakoid membrane. One of the components of the core complex of photosystem II (PSII). PSII is a light-driven water:plastoquinone oxidoreductase that uses light energy to abstract electrons from H(2)O, generating O(2) and a proton gradient subsequently used for ATP formation. It consists of a core antenna complex that captures photons, and an electron transfer chain that converts photonic excitation into a charge separation. This subunit is found at the monomer-monomer interface. The polypeptide is Photosystem II reaction center protein M (Phaseolus vulgaris (Kidney bean)).